Here is a 267-residue protein sequence, read N- to C-terminus: Diphthine--ammonia ligase (267 aa).

The residue at position 97 (Tyr97) is a Phosphotyrosine.

The protein belongs to the Diphthine--ammonia ligase family.

The enzyme catalyses diphthine-[translation elongation factor 2] + NH4(+) + ATP = diphthamide-[translation elongation factor 2] + AMP + diphosphate + H(+). Its pathway is protein modification; peptidyl-diphthamide biosynthesis. Its function is as follows. Amidase that may catalyze the last step of diphthamide biosynthesis using ammonium and ATP. Diphthamide biosynthesis consists in the conversion of an L-histidine residue in the translation elongation factor (EEF2) to diphthamide. The sequence is that of Diphthine--ammonia ligase from Homo sapiens (Human).